The following is a 341-amino-acid chain: Ketol-acid reductoisomerase (NADP(+)) (341 aa).

Positions 1 to 182 constitute a KARI N-terminal Rossmann domain; the sequence is MTELFYDDDA…GGTRAGVIKT (182 aa). Residues 25-28, S51, S53, and 83-86 contribute to the NADP(+) site; these read YGSQ and DQVQ. H108 is a catalytic residue. NADP(+) is bound at residue G134. A KARI C-terminal knotted domain is found at 183–328; that stretch reads TFTEETETDL…RELRKLFSWI (146 aa). Residues D191, E195, E227, and E231 each coordinate Mg(2+). Substrate is bound at residue S252.

This sequence belongs to the ketol-acid reductoisomerase family. Requires Mg(2+) as cofactor.

It catalyses the reaction (2R)-2,3-dihydroxy-3-methylbutanoate + NADP(+) = (2S)-2-acetolactate + NADPH + H(+). The catalysed reaction is (2R,3R)-2,3-dihydroxy-3-methylpentanoate + NADP(+) = (S)-2-ethyl-2-hydroxy-3-oxobutanoate + NADPH + H(+). It functions in the pathway amino-acid biosynthesis; L-isoleucine biosynthesis; L-isoleucine from 2-oxobutanoate: step 2/4. It participates in amino-acid biosynthesis; L-valine biosynthesis; L-valine from pyruvate: step 2/4. Functionally, involved in the biosynthesis of branched-chain amino acids (BCAA). Catalyzes an alkyl-migration followed by a ketol-acid reduction of (S)-2-acetolactate (S2AL) to yield (R)-2,3-dihydroxy-isovalerate. In the isomerase reaction, S2AL is rearranged via a Mg-dependent methyl migration to produce 3-hydroxy-3-methyl-2-ketobutyrate (HMKB). In the reductase reaction, this 2-ketoacid undergoes a metal-dependent reduction by NADPH to yield (R)-2,3-dihydroxy-isovalerate. The polypeptide is Ketol-acid reductoisomerase (NADP(+)) (Renibacterium salmoninarum (strain ATCC 33209 / DSM 20767 / JCM 11484 / NBRC 15589 / NCIMB 2235)).